Consider the following 311-residue polypeptide: Aspartate carbamoyltransferase catalytic subunit (311 aa).

2 residues coordinate carbamoyl phosphate: R55 and T56. K85 is an L-aspartate binding site. 3 residues coordinate carbamoyl phosphate: R106, H135, and Q138. L-aspartate contacts are provided by R168 and R230. 2 residues coordinate carbamoyl phosphate: L268 and P269.

This sequence belongs to the aspartate/ornithine carbamoyltransferase superfamily. ATCase family. In terms of assembly, heterododecamer (2C3:3R2) of six catalytic PyrB chains organized as two trimers (C3), and six regulatory PyrI chains organized as three dimers (R2).

It carries out the reaction carbamoyl phosphate + L-aspartate = N-carbamoyl-L-aspartate + phosphate + H(+). It participates in pyrimidine metabolism; UMP biosynthesis via de novo pathway; (S)-dihydroorotate from bicarbonate: step 2/3. Its function is as follows. Catalyzes the condensation of carbamoyl phosphate and aspartate to form carbamoyl aspartate and inorganic phosphate, the committed step in the de novo pyrimidine nucleotide biosynthesis pathway. The protein is Aspartate carbamoyltransferase catalytic subunit of Klebsiella pneumoniae (strain 342).